The primary structure comprises 414 residues: Serine/threonine transporter SstT (414 aa).

A run of 8 helical transmembrane segments spans residues 16–36, 46–66, 84–104, 143–163, 180–200, 219–239, 300–320, and 332–352; these read GSLVKQILVGLILGILLAWIS, LGTLFVGALKAVAPVLVLMLV, ILFLYLLGTFSAALAAVVFSF, ALLNANYIGILVWAVGLGFAL, AVTFMVKLVIRFAPVGIFGLV, LVVLIGCMLLVALVVNPLLVF, MAGAAITITVLTLAAVHTLGV, and VVASLCACGASGVAGGSLLLI.

It belongs to the dicarboxylate/amino acid:cation symporter (DAACS) (TC 2.A.23) family.

The protein localises to the cell inner membrane. It carries out the reaction L-serine(in) + Na(+)(in) = L-serine(out) + Na(+)(out). The enzyme catalyses L-threonine(in) + Na(+)(in) = L-threonine(out) + Na(+)(out). Its function is as follows. Involved in the import of serine and threonine into the cell, with the concomitant import of sodium (symport system). This chain is Serine/threonine transporter SstT, found in Salmonella dublin (strain CT_02021853).